The primary structure comprises 469 residues: Citrate synthase, mitochondrial (469 aa).

Residues 1 to 28 (MAFFRTVTKLRSRLGQPPSLRDSVRCLQ) constitute a mitochondrion transit peptide. Residues His-304, His-350, and Asp-405 contribute to the active site.

It belongs to the citrate synthase family. As to quaternary structure, homodimer.

Its subcellular location is the mitochondrion matrix. The catalysed reaction is oxaloacetate + acetyl-CoA + H2O = citrate + CoA + H(+). The protein operates within carbohydrate metabolism; tricarboxylic acid cycle; isocitrate from oxaloacetate: step 1/2. The protein is Citrate synthase, mitochondrial (MCSI) of Fragaria ananassa (Strawberry).